The chain runs to 67 residues: DNA-directed RNA polymerase subunit omega (67 aa).

This sequence belongs to the RNA polymerase subunit omega family. In terms of assembly, the RNAP catalytic core consists of 2 alpha, 1 beta, 1 beta' and 1 omega subunit. When a sigma factor is associated with the core the holoenzyme is formed, which can initiate transcription.

It catalyses the reaction RNA(n) + a ribonucleoside 5'-triphosphate = RNA(n+1) + diphosphate. Promotes RNA polymerase assembly. Latches the N- and C-terminal regions of the beta' subunit thereby facilitating its interaction with the beta and alpha subunits. This Moorella thermoacetica (strain ATCC 39073 / JCM 9320) protein is DNA-directed RNA polymerase subunit omega.